A 62-amino-acid polypeptide reads, in one-letter code: Small ribosomal subunit protein bS21 (62 aa).

The span at 43-52 (VKKKLKSEAA) shows a compositional bias: basic and acidic residues. Residues 43-62 (VKKKLKSEAARKRKNRRRFK) form a disordered region. The span at 53 to 62 (RKRKNRRRFK) shows a compositional bias: basic residues.

The protein belongs to the bacterial ribosomal protein bS21 family.

The chain is Small ribosomal subunit protein bS21 from Lactiplantibacillus plantarum (strain ATCC BAA-793 / NCIMB 8826 / WCFS1) (Lactobacillus plantarum).